Consider the following 614-residue polypeptide: Pentatricopeptide repeat-containing protein At1g63080, mitochondrial (614 aa).

The transit peptide at 1–7 (MSLAKRF) directs the protein to the mitochondrion. PPR repeat units lie at residues 64 to 98 (SIVE…GVSH), 99 to 133 (NLYT…GYGP), 134 to 168 (SIVT…GYQP), 169 to 203 (DTVT…GCQP), 204 to 238 (DLVT…KIEA), 239 to 273 (DVVI…GIRP), 274 to 308 (DVFT…KINP), 309 to 343 (NVVT…SIDP), 344 to 378 (NIVT…DCLP), 379 to 413 (DVVT…GLVG), 414 to 448 (NTVT…GVHP), 449 to 483 (NIMT…KMEP), 484 to 518 (DIYT…GVKP), 519 to 553 (DVIA…GPLP), and 554 to 588 (DSGT…RFAG).

It belongs to the PPR family. P subfamily.

It is found in the mitochondrion. This chain is Pentatricopeptide repeat-containing protein At1g63080, mitochondrial, found in Arabidopsis thaliana (Mouse-ear cress).